An 82-amino-acid polypeptide reads, in one-letter code: Sec-independent protein translocase protein TatA (82 aa).

A helical membrane pass occupies residues 1 to 21 (MGGISVWQLLIIAVIVVLLFG). The segment at 41–82 (KAMSEDEPAKKDDKDADFEPKSLEEQQKKEAAPESKKDKEQA) is disordered. Basic and acidic residues predominate over residues 42–82 (AMSEDEPAKKDDKDADFEPKSLEEQQKKEAAPESKKDKEQA).

It belongs to the TatA/E family. The Tat system comprises two distinct complexes: a TatABC complex, containing multiple copies of TatA, TatB and TatC subunits, and a separate TatA complex, containing only TatA subunits. Substrates initially bind to the TatABC complex, which probably triggers association of the separate TatA complex to form the active translocon.

The protein resides in the cell inner membrane. Its function is as follows. Part of the twin-arginine translocation (Tat) system that transports large folded proteins containing a characteristic twin-arginine motif in their signal peptide across membranes. TatA could form the protein-conducting channel of the Tat system. This Vibrio campbellii (strain ATCC BAA-1116) protein is Sec-independent protein translocase protein TatA.